Here is a 215-residue protein sequence, read N- to C-terminus: Peroxiredoxin 1 (215 aa).

The Thioredoxin domain occupies 1-157; sequence MKLYQKFPET…LLRITKAALV (157 aa). Catalysis depends on cysteine 45, which acts as the Cysteine sulfenic acid (-SOH) intermediate. Residue arginine 120 coordinates substrate.

Belongs to the peroxiredoxin family. Prx6 subfamily. Homodecamer. Pentamer of dimers that assemble into a ring structure.

It localises to the cytoplasm. It carries out the reaction a hydroperoxide + [thioredoxin]-dithiol = an alcohol + [thioredoxin]-disulfide + H2O. Thiol-specific peroxidase that catalyzes the reduction of hydrogen peroxide and organic hydroperoxides to water and alcohols, respectively. Plays a role in cell protection against oxidative stress by detoxifying peroxides. This is Peroxiredoxin 1 from Sulfuracidifex metallicus (Sulfolobus metallicus).